The primary structure comprises 485 residues: Polyol:NADP oxidoreductase (485 aa).

This sequence belongs to the mannitol dehydrogenase family.

Its subcellular location is the cytoplasm. This is Polyol:NADP oxidoreductase (por) from Gluconobacter oxydans (strain 621H) (Gluconobacter suboxydans).